The sequence spans 596 residues: Probable lysosomal cobalamin transporter (596 aa).

10 helical membrane passes run 13-33, 45-65, 99-119, 150-170, 201-221, 318-338, 353-373, 381-401, 425-445, and 512-532; these read IWVA…ITTF, VSIV…LLPV, VVYY…IPFA, LGFV…PAAG, LLIT…LALL, LLGG…MLIT, GYIL…VQSA, ILMA…IATI, IATV…AMIV, and VFGA…MVVF. The N-linked (GlcNAc...) asparagine glycan is linked to Asn-543. The segment at 576–596 is disordered; sequence GRAKNRNGYGTGGGEGSNGRG. Residues 584-596 are compositionally biased toward gly residues; it reads YGTGGGEGSNGRG.

It belongs to the LIMR family. LMBRD1 subfamily.

It is found in the lysosome membrane. In terms of biological role, probable lysosomal cobalamin transporter. Required to export cobalamin from lysosomes allowing its conversion to cofactors. The protein is Probable lysosomal cobalamin transporter of Podospora anserina (strain S / ATCC MYA-4624 / DSM 980 / FGSC 10383) (Pleurage anserina).